Here is a 354-residue protein sequence, read N- to C-terminus: Glutamine synthetase (354 aa).

In terms of domain architecture, GS beta-grasp spans 22-101; sequence VQAEYVWIDG…VLAETFNNDG (80 aa). The region spanning 108 to 354 is the GS catalytic domain; that stretch reads HRHHTKKVMD…IIVETTVLDK (247 aa).

The protein belongs to the glutamine synthetase family. Homooctamer.

It localises to the cytoplasm. It carries out the reaction L-glutamate + NH4(+) + ATP = L-glutamine + ADP + phosphate + H(+). In Suillus bovinus (Jersey cow bolete), this protein is Glutamine synthetase (GLNA).